A 495-amino-acid polypeptide reads, in one-letter code: MAMSLQGSRRASAGSRRRTSPPVSVRDAYGTSSLSSSSNSGSCKGSDSSPTPRRSMKYTLCSDNHGIKPPTPEQYLTPLQQKEVCIRHLKARLKDTQDRLQDRDTEIDDLKTQLSRMQEDWIEEECHRVEAQLALKEARKEIRQLKQVIDTVKNNLIDKDKGLQKYFVDINIQNKKLETLLHSMEVAQNGVAKEEGTGESAGGSPARSLTRSSTYTKLSDPAVCGDRQPGDPSNTSAEDGADSGYVAADDTLSRTDALEASSLLSSGVDCGLEEASLHSSFNLGPRFPASNTYEKLLCGMEAGVQVSCMQERAIQTDFVQYQPDLNTILEKVGQAQVCGSVLKDRHSELDPHPSGPRDPDSAVVVTVGDELEAPEPITCGPATHRPAVNSNPGLPVSVVCPVEEEEEEAAAATTTEKEPKSYWSRHYIVDLLAVVVPAVPTVAWLCRSQRRQGQPIYNISSLLRGCCTVALHSIRRISCRSLGQPSSSTAGGSQL.

Residues 1-74 form a disordered region; sequence MAMSLQGSRR…HGIKPPTPEQ (74 aa). Residues 7 to 49 are compositionally biased toward low complexity; it reads GSRRASAGSRRRTSPPVSVRDAYGTSSLSSSSNSGSCKGSDSS. The stretch at 79-161 forms a coiled coil; the sequence is LQQKEVCIRH…VKNNLIDKDK (83 aa). Residues 191–244 are disordered; that stretch reads VAKEEGTGESAGGSPARSLTRSSTYTKLSDPAVCGDRQPGDPSNTSAEDGADSG. Serine 200 and serine 204 each carry phosphoserine. Positions 207 to 217 are enriched in polar residues; the sequence is RSLTRSSTYTK. Threonine 214 bears the Phosphothreonine mark. Residue serine 219 is modified to Phosphoserine. Threonine 235 is subject to Phosphothreonine. The helical transmembrane segment at 427 to 446 threads the bilayer; that stretch reads YIVDLLAVVVPAVPTVAWLC.

In terms of assembly, binds to STX1A. Interacts with DNM1; this interaction inhibits the binding of DNM1 to AMPH and DNM1-receptor-mediated endocytosis.

It localises to the membrane. It is found in the synapse. The protein localises to the synaptosome. Functionally, inhibits SNARE complex formation by absorbing free STX1A. This chain is Syntaphilin, found in Mus musculus (Mouse).